We begin with the raw amino-acid sequence, 235 residues long: Protein GrpE (235 aa).

2 stretches are compositionally biased toward basic and acidic residues: residues 1 to 16 (MENK…HEKN) and 24 to 35 (NNVKKENLHEDQ). The disordered stretch occupies residues 1-51 (MENKNQKHNNEFHEKNQQSQKDNNNVKKENLHEDQSDLNDANFDDGGKKNK).

The protein belongs to the GrpE family. Homodimer.

The protein resides in the cytoplasm. Functionally, participates actively in the response to hyperosmotic and heat shock by preventing the aggregation of stress-denatured proteins, in association with DnaK and GrpE. It is the nucleotide exchange factor for DnaK and may function as a thermosensor. Unfolded proteins bind initially to DnaJ; upon interaction with the DnaJ-bound protein, DnaK hydrolyzes its bound ATP, resulting in the formation of a stable complex. GrpE releases ADP from DnaK; ATP binding to DnaK triggers the release of the substrate protein, thus completing the reaction cycle. Several rounds of ATP-dependent interactions between DnaJ, DnaK and GrpE are required for fully efficient folding. This chain is Protein GrpE, found in Malacoplasma penetrans (strain HF-2) (Mycoplasma penetrans).